A 440-amino-acid chain; its full sequence is Trigger factor (440 aa).

The PPIase FKBP-type domain maps to 162–247 (GDRVTFDFTG…LKKIEKFQLP (86 aa)).

The protein belongs to the FKBP-type PPIase family. Tig subfamily.

The protein resides in the cytoplasm. It carries out the reaction [protein]-peptidylproline (omega=180) = [protein]-peptidylproline (omega=0). Involved in protein export. Acts as a chaperone by maintaining the newly synthesized protein in an open conformation. Functions as a peptidyl-prolyl cis-trans isomerase. In Hamiltonella defensa subsp. Acyrthosiphon pisum (strain 5AT), this protein is Trigger factor.